A 120-amino-acid chain; its full sequence is Small ribosomal subunit protein uS12c (120 aa).

Belongs to the universal ribosomal protein uS12 family. Part of the 30S ribosomal subunit.

It localises to the plastid. It is found in the apicoplast. Its function is as follows. With S4 and S5 plays an important role in translational accuracy. Located at the interface of the 30S and 50S subunits. The polypeptide is Small ribosomal subunit protein uS12c (rps12) (Eimeria tenella (Coccidian parasite)).